The sequence spans 405 residues: MENIMTLPKIKHVRAWFIGGATAEKGAGGGDYHDQGGNHWIDDHIATPMSKYRDYEQSRQSFGINVLGTLIVEVEAENGQTGFAVSTAGEMGCFIVEKHLNRFIEGKCVSDIKLIHDQMLGATMYYSGSGGLVMNTISCVDLALWDLFGKVVGLPVYKLLGGAVRDEIQFYATGARPDLAKEMGFIGGKMPTHWGPHDGDAGIRKDAAMVADMREKCGPDFWLMLDCWMSQDVNYATKLAHACAPFNLKWIEECLPPQQYEGYRELKRNAPAGMMVTSGEHHGTLQSFRTLAETGIDIMQPDVGWCGGLTTLVEIAALAKSRGQLVVPHGSSVYSHHAVITFTNTPFSEFLMTSPDCSTLRPQFDPILLDELVPVNGRIHKSVLDKPGFGVELNRDCHLKRPYSH.

Residues histidine 33 and arginine 59 each contribute to the substrate site. 3 residues coordinate Mg(2+): aspartate 226, glutamate 252, and glutamate 280. Histidine 329 acts as the Proton acceptor in catalysis. Glutamate 349 provides a ligand contact to substrate.

The protein belongs to the mandelate racemase/muconate lactonizing enzyme family. RhamD subfamily. As to quaternary structure, homooctamer; tetramer of dimers. Mg(2+) serves as cofactor.

The enzyme catalyses L-rhamnonate = 2-dehydro-3-deoxy-L-rhamnonate + H2O. Catalyzes the dehydration of L-rhamnonate to 2-keto-3-deoxy-L-rhamnonate (KDR). The chain is L-rhamnonate dehydratase from Salmonella paratyphi C (strain RKS4594).